The primary structure comprises 172 residues: uncharacterized protein (172 aa).

The segment covering 1-17 (MISLDKDENEIEHHNEE) has biased composition (basic and acidic residues). The disordered stretch occupies residues 1 to 27 (MISLDKDENEIEHHNEENSLVEQETAP). The helical transmembrane segment at 129–151 (IVTVLIGIIVAIFVLVVIGIAAF) threads the bilayer.

Its subcellular location is the membrane. This is an uncharacterized protein from Bacillus subtilis (strain 168).